Reading from the N-terminus, the 74-residue chain is CLAVATA3/ESR (CLE)-related protein 19 (74 aa).

The signal sequence occupies residues 1 to 24 (MKIKGLMILASSLLILAFIHQSES). N-linked (GlcNAc...) asparagine glycosylation is found at Asn34 and Asn54. Hydroxyproline is present on residues Pro65 and Pro68. Pro68 carries an O-linked (Ara...) hydroxyproline glycan.

This sequence belongs to the CLV3/ESR signal peptide family. Post-translationally, the O-glycosylation (arabinosylation) of the hydroxyproline Pro-68 enhances binding affinity of the CLE19p peptide for its receptor. Mostly expressed in heart-shape embryos, pollen and young flower buds, and, to a lower extent, in inflorescence, leaves and roots.

The protein resides in the secreted. It localises to the extracellular space. Its function is as follows. Extracellular signal peptide that regulates cell fate. Represses root apical meristem maintenance. The chain is CLAVATA3/ESR (CLE)-related protein 19 from Arabidopsis thaliana (Mouse-ear cress).